Reading from the N-terminus, the 162-residue chain is Transcription antitermination protein RfaH (162 aa).

It belongs to the RfaH family. Interacts with both the nontemplate DNA and the RNA polymerase (RNAP).

Its function is as follows. Enhances distal genes transcription elongation in a specialized subset of operons that encode extracytoplasmic components. RfaH is recruited into a multi-component RNA polymerase complex by the ops element, which is a short conserved DNA sequence located downstream of the main promoter of these operons. Once bound, RfaH suppresses pausing and inhibits Rho-dependent and intrinsic termination at a subset of sites. Termination signals are bypassed, which allows complete synthesis of long RNA chains. Also negatively controls expression and surface presentation of AG43 and possibly another AG43-independent factor that mediates cell-cell interactions and biofilm formation,. This chain is Transcription antitermination protein RfaH, found in Escherichia coli O6:K15:H31 (strain 536 / UPEC).